We begin with the raw amino-acid sequence, 232 residues long: Ubiquinone biosynthesis O-methyltransferase (232 aa).

Positions 36, 55, 76, and 120 each coordinate S-adenosyl-L-methionine.

It belongs to the methyltransferase superfamily. UbiG/COQ3 family.

The enzyme catalyses a 3-demethylubiquinol + S-adenosyl-L-methionine = a ubiquinol + S-adenosyl-L-homocysteine + H(+). It catalyses the reaction a 3-(all-trans-polyprenyl)benzene-1,2-diol + S-adenosyl-L-methionine = a 2-methoxy-6-(all-trans-polyprenyl)phenol + S-adenosyl-L-homocysteine + H(+). It functions in the pathway cofactor biosynthesis; ubiquinone biosynthesis. Its function is as follows. O-methyltransferase that catalyzes the 2 O-methylation steps in the ubiquinone biosynthetic pathway. The polypeptide is Ubiquinone biosynthesis O-methyltransferase (Burkholderia vietnamiensis (strain G4 / LMG 22486) (Burkholderia cepacia (strain R1808))).